A 311-amino-acid polypeptide reads, in one-letter code: Malate dehydrogenase (311 aa).

NAD(+) contacts are provided by residues 7–13 (GAAGGIG) and Asp-34. 2 residues coordinate substrate: Arg-81 and Arg-87. NAD(+)-binding positions include Asn-94 and 117–119 (ITN). The substrate site is built by Asn-119 and Arg-153. Catalysis depends on His-177, which acts as the Proton acceptor. An NAD(+)-binding site is contributed by Met-227.

This sequence belongs to the LDH/MDH superfamily. MDH type 1 family. Homodimer.

The catalysed reaction is (S)-malate + NAD(+) = oxaloacetate + NADH + H(+). Catalyzes the reversible oxidation of malate to oxaloacetate. The polypeptide is Malate dehydrogenase (Shewanella pealeana (strain ATCC 700345 / ANG-SQ1)).